We begin with the raw amino-acid sequence, 416 residues long: Protein P47 (416 aa).

This sequence belongs to the TULIP P47 family. Part of a crude toxin extract that includes BoNTA2/NTNH, P47, OrfX2 and OrfX3; OrfX1 was not detected.

Its function is as follows. Part of a botulinum neurotoxin type A2 (BoNT) locus; may be part of a progenitor toxin complex required to protect BoNT during its passage through the host gastrointestinal tract. The polypeptide is Protein P47 (Clostridium botulinum (strain Kyoto / Type A2)).